The sequence spans 791 residues: AP-1 complex subunit gamma-like 2 (791 aa).

A GAE domain is found at A671–P786.

This sequence belongs to the adaptor complexes large subunit family. In terms of assembly, may interact with AP1S1/Sigma1A-adaptin and AP1S2/Sigma1B-adaptin. Probably does not interact with APB1. Interacts (via GAE domain) with RABEP1, NECAP1, CLINT1 and AFTPH/aftiphilin. Interacts with HBV major surface antigen L. Interacts with HBV core protein C in a ubiquitin-dependent manner. Binds ubiquitin. Widely expressed.

It localises to the golgi apparatus membrane. The protein resides in the cytoplasmic vesicle membrane. Its subcellular location is the endosome membrane. May function in protein sorting in late endosomes or multivesucular bodies (MVBs). Involved in MVB-assisted maturation of hepatitis B virus (HBV). This is AP-1 complex subunit gamma-like 2 (Ap1g2) from Mus musculus (Mouse).